We begin with the raw amino-acid sequence, 223 residues long: Deoxyribose-phosphate aldolase (223 aa).

Asp89 serves as the catalytic Proton donor/acceptor. The active-site Schiff-base intermediate with acetaldehyde is Lys152. Lys181 (proton donor/acceptor) is an active-site residue.

This sequence belongs to the DeoC/FbaB aldolase family. DeoC type 1 subfamily.

The protein resides in the cytoplasm. The catalysed reaction is 2-deoxy-D-ribose 5-phosphate = D-glyceraldehyde 3-phosphate + acetaldehyde. It participates in carbohydrate degradation; 2-deoxy-D-ribose 1-phosphate degradation; D-glyceraldehyde 3-phosphate and acetaldehyde from 2-deoxy-alpha-D-ribose 1-phosphate: step 2/2. Functionally, catalyzes a reversible aldol reaction between acetaldehyde and D-glyceraldehyde 3-phosphate to generate 2-deoxy-D-ribose 5-phosphate. This Bacillus cereus (strain ATCC 14579 / DSM 31 / CCUG 7414 / JCM 2152 / NBRC 15305 / NCIMB 9373 / NCTC 2599 / NRRL B-3711) protein is Deoxyribose-phosphate aldolase.